We begin with the raw amino-acid sequence, 183 residues long: Orotate phosphoribosyltransferase (183 aa).

Residues R21, K88, and 112 to 120 each bind 5-phospho-alpha-D-ribose 1-diphosphate; that span reads EDVVTTGES. T116 and R144 together coordinate orotate.

The protein belongs to the purine/pyrimidine phosphoribosyltransferase family. PyrE subfamily. In terms of assembly, homodimer. The cofactor is Mg(2+).

It carries out the reaction orotidine 5'-phosphate + diphosphate = orotate + 5-phospho-alpha-D-ribose 1-diphosphate. The protein operates within pyrimidine metabolism; UMP biosynthesis via de novo pathway; UMP from orotate: step 1/2. Functionally, catalyzes the transfer of a ribosyl phosphate group from 5-phosphoribose 1-diphosphate to orotate, leading to the formation of orotidine monophosphate (OMP). The protein is Orotate phosphoribosyltransferase of Thermus thermophilus (strain ATCC 27634 / DSM 579 / HB8).